A 219-amino-acid polypeptide reads, in one-letter code: Large ribosomal subunit protein uL29m (219 aa).

A disordered region spans residues 77-97 (ASKYPLPKPVSPEKLEKREST). The span at 87 to 97 (SPEKLEKREST) shows a compositional bias: basic and acidic residues.

Belongs to the universal ribosomal protein uL29 family. In terms of assembly, component of the mitochondrial large ribosomal subunit. Mature mitochondrial ribosomes consist of a small (37S) and a large (54S) subunit. The 37S subunit contains at least 33 different proteins and 1 molecule of RNA (15S). The 54S subunit contains at least 45 different proteins and 1 molecule of RNA (21S).

The protein localises to the mitochondrion. The polypeptide is Large ribosomal subunit protein uL29m (mrpl4) (Emericella nidulans (strain FGSC A4 / ATCC 38163 / CBS 112.46 / NRRL 194 / M139) (Aspergillus nidulans)).